The chain runs to 375 residues: Tubulinyl-Tyr carboxypeptidase 1 (375 aa).

Over residues 1–33 (MPGGKKVVPSGSSSASPNAAATTTAAAAAAAAA) the composition is skewed to low complexity. A disordered region spans residues 1-69 (MPGGKKVVPS…EEDLRDGGVP (69 aa)). The segment covering 53-63 (EEPEEEGEEDL) has biased composition (acidic residues). Residues C179, H214, and S231 contribute to the active site. The disordered stretch occupies residues 309 to 375 (RDMRLKIGKG…PDLSGYQIRV (67 aa)). Residues 329–375 (KKDVSSPQRAQSSPHRRNSRSERRPSGEKKPAEPKAMPDLSGYQIRV) form an involved in heparin-binding and antiangiogenic activity region. Residues 347-361 (SRSERRPSGEKKPAE) are compositionally biased toward basic and acidic residues.

It belongs to the transglutaminase-like superfamily. Vasohibin family. Interacts with SVBP; interaction enhances VASH1 tyrosine carboxypeptidase activity. Ubiquitinated in vitro. Expressed at low level in proliferating endothelial cells at the sprouting front but highly expressed in nonproliferating endothelial cells in the termination zone.

It is found in the cytoplasm. The protein localises to the secreted. The enzyme catalyses C-terminal L-alpha-aminoacyl-L-glutamyl-L-glutamyl-L-tyrosyl-[tubulin] + H2O = C-terminal L-alpha-aminoacyl-L-glutamyl-L-glutamyl-[tubulin] + L-tyrosine. In terms of biological role, tyrosine carboxypeptidase that removes the C-terminal tyrosine residue of alpha-tubulin, thereby regulating microtubule dynamics and function. Acts as an angiogenesis inhibitor: inhibits migration, proliferation and network formation by endothelial cells as well as angiogenesis. This inhibitory effect is selective to endothelial cells as it does not affect the migration of smooth muscle cells or fibroblasts. This chain is Tubulinyl-Tyr carboxypeptidase 1, found in Mus musculus (Mouse).